A 211-amino-acid polypeptide reads, in one-letter code: GATA transcription factor 19 (211 aa).

The GATA-type zinc-finger motif lies at 77–102; sequence CANCDTTSTPLWRNGPRGPKSLCNAC. The interval 111 to 131 is disordered; that stretch reads RRASTARNSTSGGGSTAAGVP.

It belongs to the type IV zinc-finger family. Class B subfamily. In terms of assembly, forms heterodimers with GATA18.

The protein resides in the nucleus. Functionally, transcriptional regulator that specifically binds 5'-GATA-3' or 5'-GAT-3' motifs within gene promoters. Regulates both flower and shoot apical meristem (SAM) development, especially for establishing organ boundaries in shoots and flowers, probably by controlling the number and position of WUS-expressing cells. The chain is GATA transcription factor 19 from Arabidopsis thaliana (Mouse-ear cress).